A 176-amino-acid chain; its full sequence is Calcium and integrin-binding family member 2 (176 aa).

EF-hand domains lie at 55–90 (RENP…LCES), 92–127 (PRDL…LTKS), and 133–168 (EVVL…APDF). Residues aspartate 105, asparagine 107, aspartate 109, aspartate 116, aspartate 146, aspartate 148, aspartate 150, lysine 152, and aspartate 157 each coordinate Ca(2+).

As to quaternary structure, monomer. Homodimer. Interacts with WHRN and MYO7A. Interacts with ITGA2B (via C-terminus cytoplasmic tail region); the interactions are stabilized/increased in a calcium and magnesium-dependent manner. Interacts with ITGA7 (via C-terminus cytoplasmic tail region); the interactions are stabilized/increased in a calcium and magnesium-dependent manner. Interacts with TMC1. Interacts with TMC2. Expressed in liver, heart, kidney, brain, spleen, stomach, ovary, testis and muscle.

It is found in the cytoplasm. The protein localises to the cell projection. It localises to the stereocilium. The protein resides in the photoreceptor inner segment. Its subcellular location is the cilium. It is found in the photoreceptor outer segment. The protein localises to the cell membrane. It localises to the sarcolemma. Functionally, calcium- and integrin-binding protein that plays a role in intracellular calcium homeostasis. Acts as an auxiliary subunit of the sensory mechanoelectrical transduction (MET) channel in hair cells. Essential for mechanoelectrical transduction (MET) currents in auditory hair cells and thereby required for hearing. Regulates the function of hair cell mechanotransduction by controlling the distribution of transmembrane channel-like proteins TMC1 and TMC2, and by regulating the function of the MET channels in hair cells. Required for the maintenance of auditory hair cell stereocilia bundle morphology and function and for hair-cell survival in the cochlea. Critical for proper photoreceptor cell maintenance and function. Plays a role in intracellular calcium homeostasis by decreasing ATP-induced calcium release. The chain is Calcium and integrin-binding family member 2 (CIB2) from Ovis aries (Sheep).